The following is a 213-amino-acid chain: Pyridoxine/pyridoxamine 5'-phosphate oxidase (213 aa).

Residues 8–11 and Lys66 contribute to the substrate site; that span reads RQEY. FMN is bound by residues 61–66, 76–77, Arg82, Lys83, and Gln105; these read RTVLLK and YT. Substrate contacts are provided by Tyr123, Arg127, and Ser131. FMN-binding positions include 140–141 and Trp185; that span reads QS. Residue 191–193 coordinates substrate; sequence RLH. An FMN-binding site is contributed by Arg195.

Belongs to the pyridoxamine 5'-phosphate oxidase family. Homodimer. It depends on FMN as a cofactor.

The catalysed reaction is pyridoxamine 5'-phosphate + O2 + H2O = pyridoxal 5'-phosphate + H2O2 + NH4(+). It carries out the reaction pyridoxine 5'-phosphate + O2 = pyridoxal 5'-phosphate + H2O2. It participates in cofactor metabolism; pyridoxal 5'-phosphate salvage; pyridoxal 5'-phosphate from pyridoxamine 5'-phosphate: step 1/1. Its pathway is cofactor metabolism; pyridoxal 5'-phosphate salvage; pyridoxal 5'-phosphate from pyridoxine 5'-phosphate: step 1/1. In terms of biological role, catalyzes the oxidation of either pyridoxine 5'-phosphate (PNP) or pyridoxamine 5'-phosphate (PMP) into pyridoxal 5'-phosphate (PLP). In Bacteroides thetaiotaomicron (strain ATCC 29148 / DSM 2079 / JCM 5827 / CCUG 10774 / NCTC 10582 / VPI-5482 / E50), this protein is Pyridoxine/pyridoxamine 5'-phosphate oxidase.